The sequence spans 591 residues: Aspartate--tRNA(Asp/Asn) ligase (591 aa).

E174 lines the L-aspartate pocket. Residues 198-201 (QLFK) are aspartate. R220 contributes to the L-aspartate binding site. ATP contacts are provided by residues 220-222 (RDE) and Q229. Residue H450 participates in L-aspartate binding. ATP is bound at residue E483. R490 contacts L-aspartate. 535–538 (GLDR) is an ATP binding site.

This sequence belongs to the class-II aminoacyl-tRNA synthetase family. Type 1 subfamily. In terms of assembly, homodimer.

The protein resides in the cytoplasm. It carries out the reaction tRNA(Asx) + L-aspartate + ATP = L-aspartyl-tRNA(Asx) + AMP + diphosphate. In terms of biological role, aspartyl-tRNA synthetase with relaxed tRNA specificity since it is able to aspartylate not only its cognate tRNA(Asp) but also tRNA(Asn). Reaction proceeds in two steps: L-aspartate is first activated by ATP to form Asp-AMP and then transferred to the acceptor end of tRNA(Asp/Asn). The sequence is that of Aspartate--tRNA(Asp/Asn) ligase from Pseudomonas fluorescens (strain ATCC BAA-477 / NRRL B-23932 / Pf-5).